We begin with the raw amino-acid sequence, 181 residues long: Large ribosomal subunit protein uL30 (181 aa).

It belongs to the universal ribosomal protein uL30 family. As to quaternary structure, part of the 50S ribosomal subunit.

The polypeptide is Large ribosomal subunit protein uL30 (Hyperthermus butylicus (strain DSM 5456 / JCM 9403 / PLM1-5)).